Here is a 436-residue protein sequence, read N- to C-terminus: 3-ketoacyl-CoA thiolase (436 aa).

Cysteine 99 (acyl-thioester intermediate) is an active-site residue. Catalysis depends on proton acceptor residues histidine 392 and cysteine 422.

It belongs to the thiolase-like superfamily. Thiolase family. As to quaternary structure, heterotetramer of two alpha chains (FadJ) and two beta chains (FadI).

It is found in the cytoplasm. It catalyses the reaction an acyl-CoA + acetyl-CoA = a 3-oxoacyl-CoA + CoA. Its pathway is lipid metabolism; fatty acid beta-oxidation. In terms of biological role, catalyzes the final step of fatty acid oxidation in which acetyl-CoA is released and the CoA ester of a fatty acid two carbons shorter is formed. The protein is 3-ketoacyl-CoA thiolase of Salmonella dublin (strain CT_02021853).